The chain runs to 535 residues: Beta-glucosidase 20 (535 aa).

Residues methionine 1–alanine 24 form the signal peptide. A beta-D-glucoside is bound by residues glutamine 56 and histidine 159. Residue asparagine 187 is glycosylated (N-linked (GlcNAc...) asparagine). Asparagine 204 to glutamate 205 is a binding site for a beta-D-glucoside. The active-site Proton donor is glutamate 205. Cysteine 224 and cysteine 235 form a disulfide bridge. A beta-D-glucoside is bound by residues tyrosine 351 and glutamate 424. Glutamate 424 serves as the catalytic Nucleophile. N-linked (GlcNAc...) asparagine glycosylation occurs at asparagine 468. A beta-D-glucoside contacts are provided by residues tryptophan 475, glutamate 482–tryptophan 483, and phenylalanine 491. Asparagine 501 carries N-linked (GlcNAc...) asparagine glycosylation. Positions histidine 532–leucine 535 match the Prevents secretion from ER motif.

It belongs to the glycosyl hydrolase 1 family.

The protein resides in the endoplasmic reticulum lumen. The catalysed reaction is Hydrolysis of terminal, non-reducing beta-D-glucosyl residues with release of beta-D-glucose.. The sequence is that of Beta-glucosidase 20 from Arabidopsis thaliana (Mouse-ear cress).